We begin with the raw amino-acid sequence, 1180 residues long: RecBCD enzyme subunit RecB (1180 aa).

Residues 1-852 form a DNA-binding and helicase activity, interacts with RecC region; that stretch reads MITTIPKSIN…QSGKNHISTK (852 aa). Residues 3–448 enclose the UvrD-like helicase ATP-binding domain; sequence TTIPKSINVT…YFLDTNWRSS (446 aa). 24-31 provides a ligand contact to ATP; sequence ASAGTGKT. A UvrD-like helicase C-terminal domain is found at 478–745; that stretch reads SSRINKTTKF…KIVSIHKSKG (268 aa). The tract at residues 905–1180 is nuclease activity, interacts with RecD and RecA; it reads NYNFTSYSQL…EIIKKLEQIF (276 aa). Mg(2+) contacts are provided by His964, Asp1075, and Asp1088. Catalysis depends on Asp1088, which acts as the For nuclease activity.

This sequence belongs to the helicase family. UvrD subfamily. In terms of assembly, heterotrimer of RecB, RecC and RecD. All subunits contribute to DNA-binding. Interacts with RecA. The cofactor is Mg(2+).

The enzyme catalyses Exonucleolytic cleavage (in the presence of ATP) in either 5'- to 3'- or 3'- to 5'-direction to yield 5'-phosphooligonucleotides.. The catalysed reaction is Couples ATP hydrolysis with the unwinding of duplex DNA by translocating in the 3'-5' direction.. It catalyses the reaction ATP + H2O = ADP + phosphate + H(+). In terms of biological role, a helicase/nuclease that prepares dsDNA breaks (DSB) for recombinational DNA repair. Binds to DSBs and unwinds DNA via a highly rapid and processive ATP-dependent bidirectional helicase activity. Unwinds dsDNA until it encounters a Chi (crossover hotspot instigator) sequence from the 3' direction. Cuts ssDNA a few nucleotides 3' to the Chi site. The properties and activities of the enzyme are changed at Chi. The Chi-altered holoenzyme produces a long 3'-ssDNA overhang and facilitates RecA-binding to the ssDNA for homologous DNA recombination and repair. Holoenzyme degrades any linearized DNA that is unable to undergo homologous recombination. In the holoenzyme this subunit contributes ATPase, 3'-5' helicase, exonuclease activity and loads RecA onto ssDNA. This is RecBCD enzyme subunit RecB from Buchnera aphidicola subsp. Baizongia pistaciae (strain Bp).